We begin with the raw amino-acid sequence, 596 residues long: Polyphenol oxidase B, chloroplastic (596 aa).

The interval 1-23 (MASVVCNSSSSTTTTTLKTPFTS) is disordered. Residues 1-87 (MASVVCNSSS…ANAIPLAASA (87 aa)) constitute a chloroplast transit peptide. The span at 8–23 (SSSSTTTTTLKTPFTS) shows a compositional bias: low complexity. 2 cysteine pairs are disulfide-bonded: C98–C114 and C113–C182. Cu cation is bound by residues H181, H199, H208, H329, H333, and H371. A cross-link (2'-(S-cysteinyl)-histidine (Cys-His)) is located at residues 185–199 (CNGAYIIGGKELQVH).

Belongs to the tyrosinase family. Requires Cu(2+) as cofactor.

The protein localises to the plastid. The protein resides in the chloroplast thylakoid lumen. It carries out the reaction 2 catechol + O2 = 2 1,2-benzoquinone + 2 H2O. Functionally, catalyzes the oxidation of mono- and o-diphenols to o-diquinones. The polypeptide is Polyphenol oxidase B, chloroplastic (Solanum lycopersicum (Tomato)).